A 277-amino-acid polypeptide reads, in one-letter code: Collectin-10 (277 aa).

The signal sequence occupies residues 1 to 27 (MNGFASLLRRNQFILLVLFLLQIQSLG). The interval 40–107 (ATHTISPGPK…GDKGEKGLLG (68 aa)) is disordered. The span at 49–64 (KGDDGEKGDPGEEGKH) shows a compositional bias: basic and acidic residues. The region spanning 53–112 (GEKGDPGEEGKHGKVGRMGPKGIKGELGDMGDQGNIGKTGPIGKKGDKGEKGLLGIPGEK) is the Collagen-like domain. One can recognise a C-type lectin domain in the interval 155–271 (TEEKFYYIVQ…CHLTMYFVCE (117 aa)). 2 cysteine pairs are disulfide-bonded: cysteine 176–cysteine 270 and cysteine 248–cysteine 262. An N-linked (GlcNAc...) asparagine glycan is attached at asparagine 258.

Belongs to the COLEC10/COLEC11 family. As to expression, highly expressed in liver, placenta and adrenal gland. Moderately expressed in small intestine, lung, stomach and prostate. Weakly expressed in trachea and spleen.

Its subcellular location is the secreted. It is found in the golgi apparatus. It localises to the cytoplasm. Its function is as follows. Lectin that binds to various sugars: galactose &gt; mannose = fucose &gt; N-acetylglucosamine &gt; N-acetylgalactosamine. Acts as a chemoattractant, probably involved in the regulation of cell migration. In Homo sapiens (Human), this protein is Collectin-10 (COLEC10).